The primary structure comprises 252 residues: MLAKRIIPCLDVKEGRVVKGVNFIGLQDVGDPVEIAALYNDAGADEIVFLDITATHEGRKTIIDVVEKTASKVFIPLTVGGGISSVKDMYNLLRAGADKVSINSAAVRNPKLIEEGAEHFGSQCIVVAIDARKVAEDKWNVYVNGGRVDTGIDAIGWAKRVTELGAGEILLTSMDADGTKNGYDLRLTEEISKSVSVPVIASGGCGHADHIIEVFQKTTVDAALAASIFHYGEATIGDVKRKLRNANVEVRL.

Catalysis depends on residues aspartate 11 and aspartate 130.

Belongs to the HisA/HisF family. As to quaternary structure, heterodimer of HisH and HisF.

The protein resides in the cytoplasm. It catalyses the reaction 5-[(5-phospho-1-deoxy-D-ribulos-1-ylimino)methylamino]-1-(5-phospho-beta-D-ribosyl)imidazole-4-carboxamide + L-glutamine = D-erythro-1-(imidazol-4-yl)glycerol 3-phosphate + 5-amino-1-(5-phospho-beta-D-ribosyl)imidazole-4-carboxamide + L-glutamate + H(+). It participates in amino-acid biosynthesis; L-histidine biosynthesis; L-histidine from 5-phospho-alpha-D-ribose 1-diphosphate: step 5/9. IGPS catalyzes the conversion of PRFAR and glutamine to IGP, AICAR and glutamate. The HisF subunit catalyzes the cyclization activity that produces IGP and AICAR from PRFAR using the ammonia provided by the HisH subunit. This is Imidazole glycerol phosphate synthase subunit HisF from Bacillus cereus (strain Q1).